Consider the following 230-residue polypeptide: Ribosomal RNA small subunit methyltransferase G (230 aa).

S-adenosyl-L-methionine contacts are provided by residues Gly-95, Phe-100, 146-147, and Arg-159; that span reads GE.

This sequence belongs to the methyltransferase superfamily. RNA methyltransferase RsmG family.

It is found in the cytoplasm. In terms of biological role, specifically methylates the N7 position of a guanine in 16S rRNA. The polypeptide is Ribosomal RNA small subunit methyltransferase G (Parabacteroides distasonis (strain ATCC 8503 / DSM 20701 / CIP 104284 / JCM 5825 / NCTC 11152)).